A 285-amino-acid polypeptide reads, in one-letter code: Putative ABC transporter ATP-binding protein CPE0195 (285 aa).

The ABC transporter domain maps to 6–242 (LKVEELNYNY…KEVIRKVNLR (237 aa)). 39 to 46 (GGNGVGKS) serves as a coordination point for ATP.

The protein belongs to the ABC transporter superfamily.

It is found in the cell membrane. Functionally, probably part of an ABC transporter complex. Responsible for energy coupling to the transport system. In Clostridium perfringens (strain 13 / Type A), this protein is Putative ABC transporter ATP-binding protein CPE0195.